Consider the following 407-residue polypeptide: Argininosuccinate synthase (407 aa).

ATP-binding positions include 13 to 21 (AYSGGLDTS) and A40. Residues Y91 and S96 each coordinate L-citrulline. G121 is a binding site for ATP. T123, N127, and D128 together coordinate L-aspartate. N127 contributes to the L-citrulline binding site. Residues R131, S182, S191, E267, and Y279 each coordinate L-citrulline.

Belongs to the argininosuccinate synthase family. Type 1 subfamily. Homotetramer.

It localises to the cytoplasm. The catalysed reaction is L-citrulline + L-aspartate + ATP = 2-(N(omega)-L-arginino)succinate + AMP + diphosphate + H(+). Its pathway is amino-acid biosynthesis; L-arginine biosynthesis; L-arginine from L-ornithine and carbamoyl phosphate: step 2/3. The chain is Argininosuccinate synthase from Agrobacterium fabrum (strain C58 / ATCC 33970) (Agrobacterium tumefaciens (strain C58)).